A 367-amino-acid chain; its full sequence is Putative ionic transporter y4hA (367 aa).

Transmembrane regions (helical) follow at residues 12–32 (VPLW…MTLA), 39–59 (SVVL…ASVH), 74–94 (AILL…SLML), 108–128 (VFAA…VLGG), 143–163 (AALA…NFVT), 172–192 (AIQL…FLFV), 221–241 (LAAG…AMLL), 249–269 (VEAL…VVLL), 291–311 (VLGS…AISV), 318–338 (ALGL…VGTI), and 347–367 (VLQG…SAIP).

This sequence belongs to the Ca(2+):cation antiporter (CaCA) (TC 2.A.19) family.

The protein resides in the cell membrane. Functionally, possible cation transporter. This Sinorhizobium fredii (strain NBRC 101917 / NGR234) protein is Putative ionic transporter y4hA.